Here is a 300-residue protein sequence, read N- to C-terminus: UDP-N-acetylenolpyruvoylglucosamine reductase (300 aa).

The FAD-binding PCMH-type domain occupies 22 to 190 (RVGGAAEWLA…LSARFRLQPG (169 aa)). Arg-169 is an active-site residue. Catalysis depends on Ser-220, which acts as the Proton donor. Glu-290 is an active-site residue.

It belongs to the MurB family. FAD serves as cofactor.

Its subcellular location is the cytoplasm. The catalysed reaction is UDP-N-acetyl-alpha-D-muramate + NADP(+) = UDP-N-acetyl-3-O-(1-carboxyvinyl)-alpha-D-glucosamine + NADPH + H(+). It functions in the pathway cell wall biogenesis; peptidoglycan biosynthesis. Cell wall formation. The sequence is that of UDP-N-acetylenolpyruvoylglucosamine reductase from Synechococcus sp. (strain CC9605).